Consider the following 367-residue polypeptide: snRNA-activating protein complex subunit 1 (367 aa).

The SNAPC3-binding stretch occupies residues 1-168; sequence MGTPPGLQTD…EEFKDPSDRV (168 aa). An SNAPC4-binding region spans residues 164–268; sequence PSDRVMKLIT…AESLAKIKSK (105 aa). 2 disordered regions span residues 228-254 and 278-367; these read KDRK…QETE and KSRR…KRKH. The span at 238-254 shows a compositional bias: basic and acidic residues; the sequence is KINDGEEKMEGNSQETE. Phosphoserine is present on residues S289 and S290. Polar residues predominate over residues 292–301; sequence CDSASGQGQV.

In terms of assembly, part of the SNAPc complex composed of 5 subunits: SNAPC1, SNAPC2, SNAPC3, SNAPC4 and SNAPC5. SNAPC1 interacts with SNAPC3, SNAPC4 and TBP.

Its subcellular location is the nucleus. Its function is as follows. Part of the SNAPc complex required for the transcription of both RNA polymerase II and III small-nuclear RNA genes. Binds to the proximal sequence element (PSE), a non-TATA-box basal promoter element common to these 2 types of genes. Recruits TBP and BRF2 to the U6 snRNA TATA box. This Macaca fascicularis (Crab-eating macaque) protein is snRNA-activating protein complex subunit 1 (SNAPC1).